We begin with the raw amino-acid sequence, 86 residues long: Neurotoxin LmNaTx34.2 (86 aa).

A signal peptide spans 1 to 18 (MKTLILVVIALMVIEVKS). One can recognise an LCN-type CS-alpha/beta domain in the interval 19-85 (DGYLMVRAGR…IWTYEKNTCS (67 aa)). 4 cysteine pairs are disulfide-bonded: Cys-32–Cys-84, Cys-36–Cys-57, Cys-43–Cys-64, and Cys-47–Cys-66.

Belongs to the long (4 C-C) scorpion toxin superfamily. Sodium channel inhibitor family. Beta subfamily. Expressed by the venom gland.

It is found in the secreted. In terms of biological role, binds voltage-independently at site-4 of sodium channels (Nav) and shift the voltage of activation toward more negative potentials thereby affecting sodium channel activation and promoting spontaneous and repetitive firing. The polypeptide is Neurotoxin LmNaTx34.2 (Lychas mucronatus (Chinese swimming scorpion)).